The primary structure comprises 889 residues: Cytoplasmic aconitate hydratase (889 aa).

Substrate-binding positions include Gln-86 and 205–207; that span reads DSH. [4Fe-4S] cluster-binding residues include Cys-437, Cys-503, and Cys-506. Residues Arg-536, Arg-541, Arg-699, and 779-780 each bind substrate; that span reads SR.

It belongs to the aconitase/IPM isomerase family. Interacts (when associated with the 4Fe-4S) with FBXL5. Interacts with frataxin(81-210). The cofactor is [4Fe-4S] cluster.

It is found in the cytoplasm. Its subcellular location is the cytosol. It carries out the reaction citrate = D-threo-isocitrate. Functionally, bifunctional iron sensor that switches between 2 activities depending on iron availability. Iron deprivation, promotes its mRNA binding activity through which it regulates the expression of genes involved in iron uptake, sequestration and utilization. Binds to iron-responsive elements (IRES) in the untranslated region of target mRNAs preventing for instance the translation of ferritin and aminolevulinic acid synthase and stabilizing the transferrin receptor mRNA. Its function is as follows. Conversely, when cellular iron levels are high, binds a 4Fe-4S cluster which precludes RNA binding activity and promotes the aconitase activity, the isomerization of citrate to isocitrate via cis-aconitate. The sequence is that of Cytoplasmic aconitate hydratase (ACO1) from Oryctolagus cuniculus (Rabbit).